A 221-amino-acid chain; its full sequence is 7-carboxy-7-deazaguanine synthase (221 aa).

Residues 12 to 14 and R27 contribute to the substrate site; that span reads ING. In terms of domain architecture, Radical SAM core spans 18–216; the sequence is KSGQLSVFIR…IQIHKIIWNP (199 aa). Residues C31, C35, and C38 each coordinate [4Fe-4S] cluster. T40 provides a ligand contact to Mg(2+). T73 serves as a coordination point for substrate. G75 is a binding site for S-adenosyl-L-methionine.

It belongs to the radical SAM superfamily. 7-carboxy-7-deazaguanine synthase family. In terms of assembly, homodimer. The cofactor is [4Fe-4S] cluster. S-adenosyl-L-methionine is required as a cofactor. Mg(2+) serves as cofactor.

It carries out the reaction 6-carboxy-5,6,7,8-tetrahydropterin + H(+) = 7-carboxy-7-deazaguanine + NH4(+). It participates in purine metabolism; 7-cyano-7-deazaguanine biosynthesis. Catalyzes the complex heterocyclic radical-mediated conversion of 6-carboxy-5,6,7,8-tetrahydropterin (CPH4) to 7-carboxy-7-deazaguanine (CDG), a step common to the biosynthetic pathways of all 7-deazapurine-containing compounds. This chain is 7-carboxy-7-deazaguanine synthase, found in Clostridium acetobutylicum (strain ATCC 824 / DSM 792 / JCM 1419 / IAM 19013 / LMG 5710 / NBRC 13948 / NRRL B-527 / VKM B-1787 / 2291 / W).